The sequence spans 570 residues: Probable metalloreductase AIM14 (570 aa).

Helical transmembrane passes span I21–L41, A70–L90, L101–R118, I142–D162, F177–M197, L204–S224, and F230–F250. Residues L101–L219 enclose the Ferric oxidoreductase domain. Residues F250 to P388 form the FAD-binding FR-type domain. A disordered region spans residues I480–S507.

It belongs to the ferric reductase (FRE) family. AIM14 subfamily. As to quaternary structure, interacts with ribosomes.

Its subcellular location is the membrane. Its function is as follows. Probable cell surface metalloreductase. May be involved in iron or copper homeostasis. This chain is Probable metalloreductase AIM14 (AIM14), found in Saccharomyces cerevisiae (strain JAY291) (Baker's yeast).